Consider the following 716-residue polypeptide: Amino-acid acetyltransferase, mitochondrial (716 aa).

The transit peptide at 1–44 (MSLHTGWPRTVNSSFLKKHRSSLCTCQHTSSVLPRSFSTTPDRH) directs the protein to the mitochondrion. Over residues 37–56 (FSTTPDRHVQQSADFSSTSR) the composition is skewed to polar residues. 2 disordered regions span residues 37–58 (FSTTPDRHVQQSADFSSTSRSY) and 96–121 (KAQHPKSPDANKPEPEKSATAPTLPS). Residues 101-112 (KSPDANKPEPEK) are compositionally biased toward basic and acidic residues. An N-acetyltransferase domain is found at 537-706 (SRPRLKLDDP…YEAVCRSIQP (170 aa)).

This sequence belongs to the acetyltransferase family.

The protein resides in the mitochondrion. It catalyses the reaction L-glutamate + acetyl-CoA = N-acetyl-L-glutamate + CoA + H(+). The protein operates within amino-acid biosynthesis; L-arginine biosynthesis; N(2)-acetyl-L-ornithine from L-glutamate: step 1/4. N-acetylglutamate synthase involved in arginine biosynthesis. This is Amino-acid acetyltransferase, mitochondrial (arg2) from Aspergillus fumigatus (strain CBS 144.89 / FGSC A1163 / CEA10) (Neosartorya fumigata).